A 251-amino-acid polypeptide reads, in one-letter code: 5-oxoprolinase subunit A 2 (251 aa).

It belongs to the LamB/PxpA family. In terms of assembly, forms a complex composed of PxpA, PxpB and PxpC.

The enzyme catalyses 5-oxo-L-proline + ATP + 2 H2O = L-glutamate + ADP + phosphate + H(+). Functionally, catalyzes the cleavage of 5-oxoproline to form L-glutamate coupled to the hydrolysis of ATP to ADP and inorganic phosphate. This is 5-oxoprolinase subunit A 2 from Pseudomonas syringae pv. tomato (strain ATCC BAA-871 / DC3000).